A 403-amino-acid chain; its full sequence is Phosphopentomutase 2 (403 aa).

Mn(2+) contacts are provided by aspartate 13, aspartate 298, histidine 303, aspartate 339, histidine 340, and histidine 351.

Belongs to the phosphopentomutase family. Mn(2+) serves as cofactor.

It localises to the cytoplasm. The enzyme catalyses 2-deoxy-alpha-D-ribose 1-phosphate = 2-deoxy-D-ribose 5-phosphate. The catalysed reaction is alpha-D-ribose 1-phosphate = D-ribose 5-phosphate. Its pathway is carbohydrate degradation; 2-deoxy-D-ribose 1-phosphate degradation; D-glyceraldehyde 3-phosphate and acetaldehyde from 2-deoxy-alpha-D-ribose 1-phosphate: step 1/2. In terms of biological role, isomerase that catalyzes the conversion of deoxy-ribose 1-phosphate (dRib-1-P) and ribose 1-phosphate (Rib-1-P) to deoxy-ribose 5-phosphate (dRib-5-P) and ribose 5-phosphate (Rib-5-P), respectively. The chain is Phosphopentomutase 2 from Streptococcus agalactiae serotype Ia (strain ATCC 27591 / A909 / CDC SS700).